Reading from the N-terminus, the 156-residue chain is Eosinophil cationic-type ribonuclease 3 (156 aa).

The signal sequence occupies residues 1–25; it reads MGPKLLESRLCLLLLLRLVLMLASC. The active-site Proton acceptor is the histidine 38. A glycan (N-linked (GlcNAc...) asparagine) is linked at asparagine 41. 4 disulfide bridges follow: cysteine 47–cysteine 106, cysteine 61–cysteine 119, cysteine 79–cysteine 134, and cysteine 86–cysteine 94. 62-66 contacts substrate; it reads KGLNT. N-linked (GlcNAc...) asparagine glycans are attached at residues asparagine 89, asparagine 96, and asparagine 107. Histidine 151 acts as the Proton donor in catalysis.

The protein belongs to the pancreatic ribonuclease family.

This Mus musculus (Mouse) protein is Eosinophil cationic-type ribonuclease 3 (Ear3).